The primary structure comprises 507 residues: Phosphoprotein (507 aa).

The tract at residues 1-48 (MAEEQARHVKNGLECIRALKAEPIGSLAIGEAMAAWSEISDNPGQEQA) is interaction with N0. Disordered regions lie at residues 40 to 98 (SDNP…FPSR), 134 to 174 (GLDG…APIS), 201 to 231 (NNFP…IKKG), and 251 to 305 (ATQC…KGGD). The residue at position 86 (Ser-86) is a Phosphoserine. Residues 134–145 (GLDGDSTLSGGD) are compositionally biased toward low complexity. Residues 146–160 (NESENSDVDIGEPDT) show a composition bias toward acidic residues. Ser-151 carries the phosphoserine modification. Low complexity predominate over residues 260 to 270 (SEPSGPGAPAG). Positions 279-300 (AALTQEWTPESGTTISPRSQNK) are enriched in polar residues. The multimerization stretch occupies residues 304–376 (GDYYDDELFS…LSSIMIAIPG (73 aa)). Interaction with the L polymerase stretches follow at residues 361–377 (STLE…IPGL) and 396–410 (PIIG…AEVL). Positions 457–507 (GPASRSVIRSIIKSSRIEEDRKRYLMTLLDDIKGANDLAKFHQMLMKIIMK) are x domain (XD). Positions 459-507 (ASRSVIRSIIKSSRIEEDRKRYLMTLLDDIKGANDLAKFHQMLMKIIMK) are interaction with the nucleocapsid (N-RNA).

It belongs to the morbillivirus P protein family. Homotetramer. Interacts (via multimerization domain and XD domain) with polymerase L; this interaction forms the polymerase L-P complex. Interacts (via N-terminus) with N0 (via Ncore); this interaction allows P to chaperon N0 to avoid N polymerization and non-specific RNA binding before encapsidation. Interacts (via C-terminus) with N-RNA template (via Ntail); this interaction maintains the P/L complex anchored to the nucleocapsid template during the sequential transcription. Interacts (via C-terminus) with protein C this interaction allows C to associate with the ribonucleocapsid. In terms of processing, phosphorylation on serines by host CK2 is necessary for the formation of viral factories.

Functionally, essential cofactor of the RNA polymerase L that plays a central role in the transcription and replication by forming the polymerase complex with RNA polymerase L and recruiting L to the genomic N-RNA template for RNA synthesis. Also plays a central role in the encapsidation of nascent RNA chains by forming the encapsidation complex with the nucleocapsid protein N (N-P complex). Acts as a chaperone for newly synthesized free N protein, so-called N0, allowing encapsidation of nascent RNA chains during replication. The nucleoprotein protein N prevents excessive phosphorylation of P, which leads to down-regulation of viral transcription/ replication. Participates, together with N, in the formation of viral factories (viroplasms), which are large inclusions in the host cytoplasm where replication takes place. The sequence is that of Phosphoprotein (P/V) from Homo sapiens (Human).